The following is a 250-amino-acid chain: Probable aquaporin TIP1-1 (250 aa).

2 helical membrane-spanning segments follow: residues 25-44 (AEFISTLIFVFAGQGSGMAF) and 58-77 (LIAAAVAHAFALFVAVSVGA). The NPA 1 signature appears at 85–87 (NPA). The next 3 membrane-spanning stretches (helical) occupy residues 103-121 (GLLYWIAQLLGSTVACFLL), 144-163 (LVLEIVMTFGLVYTVYATAV), and 170-192 (LGTIAPIAIGFIVGANILVGGAF). Residues 198–200 (NPA) carry the NPA 2 motif. Residues 216–233 (WVYWVGPLIGGGLAGVIY) traverse the membrane as a helical segment.

This sequence belongs to the MIP/aquaporin (TC 1.A.8) family. TIP (TC 1.A.8.10) subfamily. In terms of tissue distribution, expressed in roots and leaves.

It localises to the vacuole membrane. Its function is as follows. Aquaporins facilitate the transport of water and small neutral solutes across cell membranes. May be involved in transport from the vacuolar compartment to the cytoplasm. This Oryza sativa subsp. japonica (Rice) protein is Probable aquaporin TIP1-1 (TIP1-1).